Here is a 509-residue protein sequence, read N- to C-terminus: Sulfoacetate--CoA ligase (509 aa).

The segment at 320-340 is disordered; it reads AFSNPLDPGQRRIGSIGRPSG.

This sequence belongs to the ATP-dependent AMP-binding enzyme family.

The protein resides in the cytoplasm. The catalysed reaction is sulfoacetate + ATP + CoA = sulfoacetyl-CoA + AMP + diphosphate. Functionally, involved in the degradation of sulfoacetate, a widespread natural product. Catalyzes the CoA- and ATP-dependent conversion of sulfoacetate to sulfoacetyl-CoA and AMP. This chain is Sulfoacetate--CoA ligase, found in Cupriavidus necator (strain ATCC 17699 / DSM 428 / KCTC 22496 / NCIMB 10442 / H16 / Stanier 337) (Ralstonia eutropha).